The primary structure comprises 335 residues: Beta-ketoacyl-[acyl-carrier-protein] synthase III (335 aa).

Active-site residues include cysteine 119 and histidine 261. The interval 262 to 266 (QANQR) is ACP-binding. Asparagine 291 is an active-site residue.

It belongs to the thiolase-like superfamily. FabH family. In terms of assembly, homodimer.

It is found in the cytoplasm. It catalyses the reaction malonyl-[ACP] + acetyl-CoA + H(+) = 3-oxobutanoyl-[ACP] + CO2 + CoA. It functions in the pathway lipid metabolism; fatty acid biosynthesis. Its function is as follows. Catalyzes the condensation reaction of fatty acid synthesis by the addition to an acyl acceptor of two carbons from malonyl-ACP. Catalyzes the first condensation reaction which initiates fatty acid synthesis and may therefore play a role in governing the total rate of fatty acid production. Possesses both acetoacetyl-ACP synthase and acetyl transacylase activities. Its substrate specificity determines the biosynthesis of branched-chain and/or straight-chain of fatty acids. The sequence is that of Beta-ketoacyl-[acyl-carrier-protein] synthase III from Prochlorococcus marinus (strain MIT 9312).